Reading from the N-terminus, the 459-residue chain is ATP-dependent RNA helicase me31b (459 aa).

A recA-like domain 1 region spans residues Met-1–Leu-267. Phosphoserine is present on residues Ser-8 and Ser-29. A Q motif motif is present at residues Asn-58–Glu-86. The 171-residue stretch at Ile-89–Ile-259 folds into the Helicase ATP-binding domain. Ala-102 to Thr-109 contacts ATP. The DEAD box motif lies at Asp-207–Asp-210. The interval Glu-264 to Val-431 is gyf binding. In terms of domain architecture, Helicase C-terminal spans Gly-269 to Leu-429. Residues Ala-432–Lys-459 form a recA-like domain 2 region. Ser-450 carries the post-translational modification Phosphoserine.

This sequence belongs to the DEAD box helicase family. DDX6/DHH1 subfamily. Conserved component of different types of multiprotein ribonucleoprotein complexes (RNPs) that form distinct germ granules (P-body, nuage, sponge body or polar granules) and P-body-like neuronal RNPs. Consequently it interacts with a wide variety of proteins, some of which appear to be common interactive partners in almost all RNPs types i.e. cup and tral, whereas other interactions are specific to a germ granule/RNP. Core functional components in me31B-containing RNPs include RNA regulatory proteins (such as translational repressor, RNA-decapping and exonuclease proteins), RNA localization proteins and additional proteins depending on the biological context of the RNPs. In the P-body RNPs, interacts with at least the translation repressor proteins tral, cup and Edc3, and the mRNA localization factor yps. Interaction with tral or Edc3 is required for translation repression and possibly RNA decapping; binding to tral and Edc3 is mutually exclusive. In the nuage and germ plasm polar granule RNPs, interacts with at least tral, cup, and additional proteins required for assembly and function of the germ granules such as tud, vas and aub. Interacts (when dimethylated on Arg residues) with tud; interaction is RNA-independent. Component of the osk RNP complex, which is composed of at least me31B, exu, yps, aret/bruno, cup, and the mRNA of osk. Component of the nanos RNP complex, which is composed of at least smg, cup, tral, me31B, the CCR4-NOT complex members Rga/NOT2 and Caf1-55, and the mRNA of nanos (nos). Interacts with tral and piRNA pathway components papi and AGO3; promotes interaction between nuage RNPs and the piRNA-mediated transposon silencing. Forms a RNP containing at least me31B, eIF4E1, cup, tral and pAbp; this interaction is required for the translational silencing of maternal mRNAs during the maternal-to-zygotic transition. In the sponge body, forms a RNP containing at least me31B, exu, yps and the mRNA of osk; interactions with exu and yps are RNA dependent. Component of a neuronal RNP, at least composed of me31B, tral and Fmr1. Component of the Atx2-Not1 repressor complex, composed of at least me31B, Atx2, tyf and pAbp. Interacts (via the C-terminus) with Atx2, tyf, pAbp and Lsm12a. Interacts (via RecA-like domain 2) with 4EHP-GYF2 complex member Gyf (via the me31B binding motif). Interacts with 4E-T, Edc3 and Patr-1. Post-translationally, symmetrically dimethylated on arginine residues. Ubiquitously expressed throughout the brain (at protein level). Expressed in the olfactory system including the antennal lobes, projection neurons, local interneurons, mushroom-body Kenyon cells and glial cells (at protein level).

It is found in the cytoplasm. Its subcellular location is the cytoplasmic ribonucleoprotein granule. It localises to the P-body. The protein localises to the endoplasmic reticulum. The protein resides in the cell projection. It is found in the dendrite. It catalyses the reaction ATP + H2O = ADP + phosphate + H(+). Its function is as follows. ATP-dependent RNA helicase which is a core component of a variety of ribonucleoprotein complexes (RNPs) that play critical roles in translational repression and mRNA decapping during embryogenesis, oogenesis, neurogenesis and neurotransmission. Recruits core components and translational repressors to some RNP complexes, and mediates RNP aggregation into processing granules such as P-bodies. As part of a RNP complex containing tral, eIF4E1, cup, and pAbp, involved in RNP-mediated translational repression of maternal mRNAs during oogenesis and embryogenesis. As part of a RNP complex containing tral and the RNA localization factors exu and yps, mediates translational silencing of mRNAs such as osk/oskar and bcd/bicoid during their transport to the oocyte in order to prevent their translation until they reach their positional destinations. In neurons and possibly imaginal disks, involved in miRNA-mediated translational repression, possibly in association with components of the piRNA transposon silencing pathway. Involved in RNA localization and protein trafficking in the oocyte. As part of an ER-associated RNP containing tral, cup and yps, required for tral-dependent ER exit site formation and consequently efficient trafficking of proteins such as grk and yl through the secretory pathway. Component of neuron RNPs that mediate transport and translation of neuronal RNAs, including translation repression of synaptic transcripts in preparation for their dendritic targeting. As part of the Atx2-Not1 repressor complex promotes Not1-dependent post-transcriptional gene silencing in adult circadian pacemaker neurons in order to sustain high-amplitude circadian rhythms and Pdf cycling in a per-independent manner. Promotes the interaction between Atx2 and Not1 within the Atx2-Not1 RNP complex. Recruited to the 4EHP-GYF2 complex by Gyf, where it plays a role in 4EHP-GYF2 mediated translational repression and mRNA decay. This Drosophila melanogaster (Fruit fly) protein is ATP-dependent RNA helicase me31b (me31B).